We begin with the raw amino-acid sequence, 616 residues long: Sulfite reductase [NADPH] hemoprotein beta-component (616 aa).

Residues 1 to 10 (MDDHSPRDAA) are compositionally biased toward basic and acidic residues. The tract at residues 1–35 (MDDHSPRDAAETPAPGPAATPAKRVYETPPTSRPI) is disordered. Over residues 11–22 (ETPAPGPAATPA) the composition is skewed to low complexity. Positions 470, 476, 515, and 519 each coordinate [4Fe-4S] cluster. Residue C519 participates in siroheme binding.

This sequence belongs to the nitrite and sulfite reductase 4Fe-4S domain family. Alpha(8)-beta(8). The alpha component is a flavoprotein, the beta component is a hemoprotein. Siroheme is required as a cofactor. Requires [4Fe-4S] cluster as cofactor.

The catalysed reaction is hydrogen sulfide + 3 NADP(+) + 3 H2O = sulfite + 3 NADPH + 4 H(+). The protein operates within sulfur metabolism; hydrogen sulfide biosynthesis; hydrogen sulfide from sulfite (NADPH route): step 1/1. In terms of biological role, component of the sulfite reductase complex that catalyzes the 6-electron reduction of sulfite to sulfide. This is one of several activities required for the biosynthesis of L-cysteine from sulfate. The polypeptide is Sulfite reductase [NADPH] hemoprotein beta-component (Methylobacterium radiotolerans (strain ATCC 27329 / DSM 1819 / JCM 2831 / NBRC 15690 / NCIMB 10815 / 0-1)).